Consider the following 106-residue polypeptide: Putative protein LRRC37A5P (106 aa).

This chain is Putative protein LRRC37A5P (LRRC37A5P), found in Homo sapiens (Human).